A 300-amino-acid polypeptide reads, in one-letter code: F-box/LRR-repeat protein 15 (300 aa).

M1 bears the N-acetylmethionine mark. Residues 19–66 (LLDLPWEDVLLPHVLSRVPLRQLLWLQRVSRAFRALVQLHLARLRRFD) form the F-box domain. Residues 113–269 (NPQLRSVALA…EPSLSRLRKR (157 aa)) are interaction with SMURF1. LRR repeat units follow at residues 141–162 (RLQR…RGLA), 167–188 (ALEE…VYLA), 194–215 (GLRN…QELA), 220–241 (ELQH…RTLA), and 246–267 (ALRS…SRLR).

This sequence belongs to the FBXL15 family. Part of the SCF (SKP1-CUL1-F-box) E3 ubiquitin-protein ligase complex SCF(FBXL15) composed of CUL1, SKP1, RBX1 and FBXL15.

Its subcellular location is the cytoplasm. Its pathway is protein modification; protein ubiquitination. Functionally, substrate recognition component of a SCF (SKP1-CUL1-F-box protein) E3 ubiquitin-protein ligase complex which mediates the ubiquitination and subsequent proteasomal degradation of SMURF1, thereby acting as a positive regulator of the BMP signaling pathway. Required for dorsal/ventral pattern formation and bone mass maintenance. Also mediates ubiquitination of SMURF2 and WWP2. The protein is F-box/LRR-repeat protein 15 (FBXL15) of Bos taurus (Bovine).